The following is a 176-amino-acid chain: ATP-dependent protease subunit HslV (176 aa).

Thr-2 is an active-site residue. Na(+) is bound by residues Gly-157, Cys-160, and Thr-163.

The protein belongs to the peptidase T1B family. HslV subfamily. As to quaternary structure, a double ring-shaped homohexamer of HslV is capped on each side by a ring-shaped HslU homohexamer. The assembly of the HslU/HslV complex is dependent on binding of ATP.

It is found in the cytoplasm. The catalysed reaction is ATP-dependent cleavage of peptide bonds with broad specificity.. Allosterically activated by HslU binding. Its function is as follows. Protease subunit of a proteasome-like degradation complex believed to be a general protein degrading machinery. This is ATP-dependent protease subunit HslV from Pseudomonas savastanoi pv. phaseolicola (strain 1448A / Race 6) (Pseudomonas syringae pv. phaseolicola (strain 1448A / Race 6)).